The following is a 356-amino-acid chain: ADP-ribosylhydrolase ARH3 (356 aa).

Residues D26, E33, T62, D63, and D64 each contribute to the Mg(2+) site. D63 provides a ligand contact to substrate. Substrate is bound by residues 132 to 138, H168, and I260; that span reads KGSYGNG. Residues D303, D305, and T306 each coordinate Mg(2+).

This sequence belongs to the ADP-ribosylglycohydrolase family. As to quaternary structure, monomer. It depends on Mg(2+) as a cofactor. The cofactor is Mn(2+).

The protein localises to the nucleus. It is found in the cytoplasm. Its subcellular location is the chromosome. The protein resides in the mitochondrion matrix. The catalysed reaction is [(1''-&gt;2')-ADP-alpha-D-ribose](n) + H2O = [(1''-&gt;2')-ADP-alpha-D-ribose](n-1) + ADP-D-ribose. It carries out the reaction 1''-O-acetyl-ADP-alpha-D-ribose + H2O = ADP-D-ribose + acetate + H(+). The enzyme catalyses O-(ADP-D-ribosyl)-L-seryl-[protein] + H2O = ADP-D-ribose + L-seryl-[protein]. It catalyses the reaction alpha-NAD(+) + H2O = ADP-D-ribose + nicotinamide + H(+). The protein undergoes a dramatic conformational switch from closed to open states upon substrate-binding, which enables specific substrate recognition for the 1''-O-linkage. The glutamate flap (Glu-33) blocks substrate entrance to Mg(2+) in the unliganded closed state. In presence of substrate, Glu-33 is ejected from the active site: this closed-to-open transition significantly widens the substrate-binding channel and precisely positions the scissile 1''-O-linkage for cleavage while securing tightly 2'- and 3'-hydroxyls of ADP-ribose. Activity is inhibited by calcium. ADP-ribosylhydrolase that preferentially hydrolyzes the scissile alpha-O-linkage attached to the anomeric C1'' position of ADP-ribose and acts on different substrates, such as proteins ADP-ribosylated on serine and threonine, free poly(ADP-ribose) and O-acetyl-ADP-D-ribose. Specifically acts as a serine mono-ADP-ribosylhydrolase by mediating the removal of mono-ADP-ribose attached to serine residues on proteins, thereby playing a key role in DNA damage response. Serine ADP-ribosylation of proteins constitutes the primary form of ADP-ribosylation of proteins in response to DNA damage. Does not hydrolyze ADP-ribosyl-arginine, -cysteine, -diphthamide, or -asparagine bonds. Also able to degrade protein free poly(ADP-ribose), which is synthesized in response to DNA damage: free poly(ADP-ribose) acts as a potent cell death signal and its degradation by ADPRHL2 protects cells from poly(ADP-ribose)-dependent cell death, a process named parthanatos. Also hydrolyzes free poly(ADP-ribose) in mitochondria. Specifically digests O-acetyl-ADP-D-ribose, a product of deacetylation reactions catalyzed by sirtuins. Specifically degrades 1''-O-acetyl-ADP-D-ribose isomer, rather than 2''-O-acetyl-ADP-D-ribose or 3''-O-acetyl-ADP-D-ribose isomers. The chain is ADP-ribosylhydrolase ARH3 (adprs) from Latimeria chalumnae (Coelacanth).